Here is a 396-residue protein sequence, read N- to C-terminus: Tryptophan synthase beta chain (396 aa).

The residue at position 86 (Lys86) is an N6-(pyridoxal phosphate)lysine.

This sequence belongs to the TrpB family. In terms of assembly, tetramer of two alpha and two beta chains. Pyridoxal 5'-phosphate is required as a cofactor.

It catalyses the reaction (1S,2R)-1-C-(indol-3-yl)glycerol 3-phosphate + L-serine = D-glyceraldehyde 3-phosphate + L-tryptophan + H2O. It functions in the pathway amino-acid biosynthesis; L-tryptophan biosynthesis; L-tryptophan from chorismate: step 5/5. Its function is as follows. The beta subunit is responsible for the synthesis of L-tryptophan from indole and L-serine. The polypeptide is Tryptophan synthase beta chain (Vibrio atlanticus (strain LGP32) (Vibrio splendidus (strain Mel32))).